The following is a 270-amino-acid chain: Pantoate kinase (270 aa).

The protein belongs to the GHMP kinase family. PoK subfamily.

The catalysed reaction is (R)-pantoate + ATP = (R)-4-phosphopantoate + ADP + H(+). The protein operates within cofactor biosynthesis; coenzyme A biosynthesis. In terms of biological role, phosphorylates (R)-pantoate to form (R)-4-phosphopantoate in the CoA biosynthesis pathway. This is Pantoate kinase from Methanocaldococcus jannaschii (strain ATCC 43067 / DSM 2661 / JAL-1 / JCM 10045 / NBRC 100440) (Methanococcus jannaschii).